Reading from the N-terminus, the 65-residue chain is Putative antitoxin MJECL31 (65 aa).

The protein belongs to the UPF0165 family.

Its function is as follows. Possibly the antitoxin component of a type II toxin-antitoxin (TA) system. This chain is Putative antitoxin MJECL31, found in Methanocaldococcus jannaschii (strain ATCC 43067 / DSM 2661 / JAL-1 / JCM 10045 / NBRC 100440) (Methanococcus jannaschii).